Consider the following 399-residue polypeptide: MNIHEYQAKAVLQPFGVSLSKGVAILKASEAEAAAKQLPGPVWVVKSQIHAGGRGKGKFKEASAGSQGGVRLAKSIDEVKQFAQEMLGATLVTLQTGPAGKQVNRLYIEEGSAIDKEFYLSLLVDRATSRVSFVVSTEGGMNIEDVAHDTPEKIISFSVDPATGIMPHHGRIVAKTLGLTGELAKQAGKLTTQLYTAFVAKDMEMLEINPLVLTKDGELRCLDAKMSFDSNSLYRQPDVVALRDTTEEDAKEIEASKHELAYIALEGTIGCMVNGAGLAMATLDIIKLYGESPANFLDVGGGATEEKVTAAFKIITADPNVKGILVNIFGGIMKCDVIARGVIAAVKTVGLEVPLVVRLEGTNVEEGKAIIRDSGLNVLSADDLDDAAQKIVNAVKKAA.

The 246-residue stretch at 9–254 (KAVLQPFGVS…TTEEDAKEIE (246 aa)) folds into the ATP-grasp domain. Residues lysine 46, 53–55 (GRG), glutamate 109, serine 112, and glutamate 117 contribute to the ATP site. The Mg(2+) site is built by asparagine 209 and aspartate 223. Substrate is bound by residues asparagine 274 and 331-333 (GIM).

Belongs to the succinate/malate CoA ligase beta subunit family. In terms of assembly, heterotetramer of two alpha and two beta subunits. It depends on Mg(2+) as a cofactor.

It catalyses the reaction succinate + ATP + CoA = succinyl-CoA + ADP + phosphate. It carries out the reaction GTP + succinate + CoA = succinyl-CoA + GDP + phosphate. It participates in carbohydrate metabolism; tricarboxylic acid cycle; succinate from succinyl-CoA (ligase route): step 1/1. Functionally, succinyl-CoA synthetase functions in the citric acid cycle (TCA), coupling the hydrolysis of succinyl-CoA to the synthesis of either ATP or GTP and thus represents the only step of substrate-level phosphorylation in the TCA. The beta subunit provides nucleotide specificity of the enzyme and binds the substrate succinate, while the binding sites for coenzyme A and phosphate are found in the alpha subunit. This is Succinate--CoA ligase [ADP-forming] subunit beta from Rhodopseudomonas palustris (strain BisA53).